The chain runs to 209 residues: Dual specificity phosphatase 29 (209 aa).

Residues 44–193 (NHVNEVWPNL…LRELDIQLAL (150 aa)) enclose the Tyrosine-protein phosphatase domain. 137–144 (NCAMGRSR) is a binding site for substrate. Cys138 functions as the Phosphocysteine intermediate in the catalytic mechanism.

It belongs to the protein-tyrosine phosphatase family. Non-receptor class dual specificity subfamily.

It localises to the cytoplasm. The protein localises to the nucleus. It catalyses the reaction O-phospho-L-tyrosyl-[protein] + H2O = L-tyrosyl-[protein] + phosphate. The catalysed reaction is O-phospho-L-seryl-[protein] + H2O = L-seryl-[protein] + phosphate. It carries out the reaction O-phospho-L-threonyl-[protein] + H2O = L-threonyl-[protein] + phosphate. In terms of biological role, dual specificity phosphatase able to dephosphorylate phosphotyrosine, phosphoserine and phosphothreonine residues within the same substrate, with a preference for phosphotyrosine as a substrate. Involved in the modulation of AMPK and MAPK1/2 signaling pathways. The protein is Dual specificity phosphatase 29 (dusp29) of Xenopus tropicalis (Western clawed frog).